A 734-amino-acid polypeptide reads, in one-letter code: Serine protease FAM111B (734 aa).

Residue methionine 1 is modified to N-acetylmethionine. Basic and acidic residues-rich tracts occupy residues 1 to 10 (MNSMKTEENK) and 17 to 32 (DDQR…TVMK). Residues 1–32 (MNSMKTEENKSFSAMEDDQRTRPEVSKDTVMK) are disordered. Residue lysine 284 forms a Glycyl lysine isopeptide (Lys-Gly) (interchain with G-Cter in SUMO2) linkage. Residues 285 to 321 (QNESATDEINHQSLIQSKKKVHKPKKDGETKDVEHSR) form a disordered region. A compositionally biased stretch (basic and acidic residues) spans 310-321 (KDGETKDVEHSR). Residues histidine 490, aspartate 544, and serine 650 each act as charge relay system in the active site. The tract at residues 712–734 (TYDEEKGKQESSLQDHQIEPMEC) is disordered.

This sequence belongs to the FAM111 family. In terms of tissue distribution, widely expressed.

Functionally, serine protease. The polypeptide is Serine protease FAM111B (Homo sapiens (Human)).